The chain runs to 109 residues: SVAFSRAVFAEFLATLLFVFFGLGSALNWPQALPSVLQIAMAFGLGIGTLVQALGHVSGAHINPAVTVACLVGCHVSFLRAAFYVAAQLLGAVAGAALLHEITPPHVRG.

Topologically, residues 1 to 6 (SVAFSR) are cytoplasmic. The chain crosses the membrane as a helical span at residues 7 to 27 (AVFAEFLATLLFVFFGLGSAL). The Extracellular portion of the chain corresponds to 28-35 (NWPQALPS). Residues 36–54 (VLQIAMAFGLGIGTLVQAL) traverse the membrane as a helical segment. At 55–59 (GHVSG) the chain is on the cytoplasmic side. An intramembrane region (discontinuously helical) is located at residues 60 to 69 (AHINPAVTVA). Positions 63-65 (NPA) match the NPA 1 motif. At 70–80 (CLVGCHVSFLR) the chain is on the cytoplasmic side. Residues 81–102 (AAFYVAAQLLGAVAGAALLHEI) form a helical membrane-spanning segment. Residues 103 to 109 (TPPHVRG) are Extracellular-facing.

This sequence belongs to the MIP/aquaporin (TC 1.A.8) family. In terms of assembly, homotetramer. Serine phosphorylation is necessary and sufficient for expression at the apical membrane. Endocytosis is not phosphorylation-dependent. Post-translationally, N-glycosylated.

It is found in the apical cell membrane. The protein resides in the basolateral cell membrane. The protein localises to the cell membrane. Its subcellular location is the cytoplasmic vesicle membrane. It localises to the golgi apparatus. It is found in the trans-Golgi network membrane. It catalyses the reaction H2O(in) = H2O(out). It carries out the reaction glycerol(in) = glycerol(out). Its function is as follows. Forms a water-specific channel that provides the plasma membranes of renal collecting duct with high permeability to water, thereby permitting water to move in the direction of an osmotic gradient. Plays an essential role in renal water homeostasis. Could also be permeable to glycerol. This chain is Aquaporin-2, found in Canis lupus familiaris (Dog).